The primary structure comprises 378 residues: Interleukin-3 receptor subunit alpha (378 aa).

The signal sequence occupies residues 1–18 (MVLLWLTLLLIALPCLLQ). Residues 19 to 305 (TKEDPNPPIT…EEGANTRAWR (287 aa)) are Extracellular-facing. 4 N-linked (GlcNAc...) asparagine glycosylation sites follow: N46, N64, N80, and N109. 4 disulfides stabilise this stretch: C52-C68, C76-C195, C112-C122, and C151-C165. 2 N-linked (GlcNAc...) asparagine glycosylation sites follow: N212 and N218. C217 and C293 are oxidised to a cystine. The WSXWS motif motif lies at 282–286 (LSAWS). The helical transmembrane segment at 306-325 (TSLLIALGTLLALVCVFVIC) threads the bilayer. At 326-378 (RRYLVMQRLFPRIPHMKDPIGDSFQNDKLVVWEAGKAGLEECLVTEVQVVQKT) the chain is on the cytoplasmic side. The Box 1 motif signature appears at 334–342 (LFPRIPHMK).

Belongs to the type I cytokine receptor family. Type 5 subfamily. In terms of assembly, interacts with IL3. Heterodimer of an alpha and a beta subunit. The beta subunit is common to the IL3, IL5 and GM-CSF receptors. Ubiquitinated by RNFT2 in response to IL3. Ubiquitination leads ligand-induced degradation by the proteasome. Ubiquitinated by RNF128 via 'Lys-27'-linked polyubiquitination, facilitating its degradation through the lysosomal pathway.

The protein localises to the cell membrane. Functionally, cell surface receptor for IL3 expressed on hematopoietic progenitor cells, monocytes and B-lymphocytes that controls the production and differentiation of hematopoietic progenitor cells into lineage-restricted cells. Ligand stimulation rapidly induces hetrodimerization with IL3RB, phosphorylation and enzyme activity of effector proteins such as JAK2 and PI3K that play a role in signaling cell proliferation and differentiation. Activation of JAK2 leads to STAT5-mediated transcriptional program. The chain is Interleukin-3 receptor subunit alpha from Homo sapiens (Human).